We begin with the raw amino-acid sequence, 198 residues long: Sortase D (198 aa).

A helical membrane pass occupies residues 7-25 (LFIIAAGLVIAGYGGFKLI). Residues 36–46 (KEAKLAAKKPQ) show a composition bias toward basic and acidic residues. The segment at 36–67 (KEAKLAAKKPQEASGTKNSTDQAKNKASFKPE) is disordered. Residues 48 to 57 (ASGTKNSTDQ) show a composition bias toward polar residues. Histidine 119 acts as the Proton donor/acceptor in catalysis. Cysteine 177 (acyl-thioester intermediate) is an active-site residue.

Belongs to the bacterial sortase family. Class D subfamily.

The protein resides in the cell membrane. In terms of biological role, transpeptidase that anchors surface proteins to the cell wall. Recognizes and modifies its substrate by proteolytic cleavage of a C-terminal sorting signal. Following cleavage, a covalent intermediate is formed via a thioester bond between the sortase and its substrate, which is then transferred and covalently attached to the cell wall. This sortase recognizes a Leu-Pro-Asp-Thr-Ser/Ala (LPDTS/A) motif. It has two substrates, YhcR and YfkN. The protein is Sortase D of Bacillus subtilis (strain 168).